Consider the following 500-residue polypeptide: MSNMQQKTDVILIGAGIMSATLGSLLKELAPEWEIKVFEKLANAGEESSNEWNNAGTGHSALCELNYTSEKSDGSIDIGKAVKVNEQFQLSRQFWAYLVKRNLIRNPQDFIMPLPHMSLVQGEKNVEFLKKRFEALSKNALFQGMEFADAPDTLKKWLPLIMEGRNSNEPMAATKIDSGTDVNFGALTRMLFDYLKTKNVELNYKHSVENIKRAKNGLWEVKVHDMNSGKIEHHTAKFVFIGGGGGSLPLLQKTGIPESKHIGGFPVSGLFMVCKNQKIVEQHHAKVYGKAKVGAPPMSVPHLDTRYIDNKKALLFGPFAGFSPKFLKTGSNLDLIGSVKPNNVLTMLAAGVKEMGLTKYLIQQVMLSHEKRMEELREFIPNAKSEDWDTVVAGQRVQVIKDTDAGGKGTLQFGTEVVSANDGSIAALLGASPGASTAVHVMLEVLEKCFPERILEWEPKIKEMVPSYGVSLTENPRLFQELHASTGRTLGLNEKEAVHN.

It belongs to the MQO family. FAD serves as cofactor.

It catalyses the reaction (S)-malate + a quinone = a quinol + oxaloacetate. It participates in carbohydrate metabolism; tricarboxylic acid cycle; oxaloacetate from (S)-malate (quinone route): step 1/1. In Bacillus mycoides (strain KBAB4) (Bacillus weihenstephanensis), this protein is Probable malate:quinone oxidoreductase.